The following is a 224-amino-acid chain: UPF0758 protein Tbd_2588 (224 aa).

One can recognise an MPN domain in the interval 102–224 (ALSSPAAVRD…ALSFAEAGHL (123 aa)). Zn(2+) is bound by residues H173, H175, and D186. The JAMM motif motif lies at 173 to 186 (HNHPSGVNEPSQAD).

This sequence belongs to the UPF0758 family.

The polypeptide is UPF0758 protein Tbd_2588 (Thiobacillus denitrificans (strain ATCC 25259 / T1)).